The primary structure comprises 809 residues: 3',5'-cyclic-AMP phosphodiesterase 4D (809 aa).

The interval Met1 to Arg107 is disordered. 3 positions are modified to phosphoserine: His54, Pro59, and Pro63. A compositionally biased stretch (pro residues) spans Pro58–Gly89. The segment covering Ala90 to Gly102 has biased composition (low complexity). Phosphoserine occurs at positions 142, 299, 301, 348, and 375. Residues Glu343–Ile364 are disordered. The PDEase domain maps to Val386–Ser715. Lys387 participates in a covalent cross-link: Glycyl lysine isopeptide (Lys-Gly) (interchain with G-Cter in SUMO). Residue His462 is the Proton donor of the active site. His462 is a binding site for 3',5'-cyclic AMP. His462 lines the AMP pocket. Zn(2+) is bound by residues His466, His502, Asp503, and Asp620. AMP-binding residues include Asp503, Asp620, Asn623, Gln671, and Phe674. Mg(2+) is bound at residue Asp503. Asp503 is a binding site for Mn(2+). Residues Gln671 and Phe674 each contribute to the 3',5'-cyclic AMP site. Disordered regions lie at residues Ser710–Gly729 and Thr739–Thr809. The span at Cys762–Ser773 shows a compositional bias: polar residues. The segment covering Pro779 to Gln796 has biased composition (acidic residues).

Belongs to the cyclic nucleotide phosphodiesterase family. PDE4 subfamily. As to quaternary structure, homodimer for the long isoforms. Isoforms with truncated N-termini are monomeric. Isoform 3 is part of a ternary complex containing PRKAR2A, PRKAR2B and AKAP9. Interacts with PDE4DIP. Identified in a complex composed of RYR1, PDE4D, PKA, FKBP1A and protein phosphatase 1 (PP1). Isoform 5, isoform N3 and isoform 12 bind RACK1 via their unique N-terminus. Binds ARRB2. Interacts (via N-terminal region) with SHANK2 (via proline-rich region); the interaction is increased in a PKA-dependent manner. Zn(2+) is required as a cofactor. Mg(2+) serves as cofactor. Requires Mn(2+) as cofactor. Post-translationally, long isoforms that share a conserved PKA phosphorylation site in the N-terminus are activated by PKA through phosphorylation. Isoform 3 and isoform 7 are activated by phosphorylation (in vitro), but not isoform 6. Isoform N3 and isoform 12 are phosphorylated on Ser-49, Ser-51, Ser-55 and Ser-59. In terms of processing, sumoylation of long isoforms by PIAS4 augments their activation by PKA phosphorylation and represses their inhibition by ERK phosphorylation. Expressed in colonic epithelial cells (at protein level). Widespread; most abundant in skeletal muscle. In terms of tissue distribution, detected in brain. As to expression, detected in brain, placenta, lung and kidney. Detected in heart and skeletal muscle.

Its subcellular location is the apical cell membrane. The protein resides in the cytoplasm. It localises to the membrane. The protein localises to the cytoskeleton. It is found in the microtubule organizing center. Its subcellular location is the centrosome. The catalysed reaction is 3',5'-cyclic AMP + H2O = AMP + H(+). It participates in purine metabolism; 3',5'-cyclic AMP degradation; AMP from 3',5'-cyclic AMP: step 1/1. Its activity is regulated as follows. Inhibited by rolipram. Activated by phosphatidic acid. Hydrolyzes the second messenger cAMP, which is a key regulator of many important physiological processes. In Homo sapiens (Human), this protein is 3',5'-cyclic-AMP phosphodiesterase 4D.